We begin with the raw amino-acid sequence, 442 residues long: F-box/FBD/LRR-repeat protein At3g14710 (442 aa).

One can recognise an F-box domain in the interval 26 to 73; the sequence is DKFSSLLESVVSIILSQLPTAEAVSTSVLSKSWKNIWTNITDLHFDDT. 3 LRR repeats span residues 126–147, 151–172, and 173–194; these read NLQR…SLFP, SLVE…AILP, and NLKF…SKNL. One can recognise an FBD domain in the interval 370 to 414; that stretch reads VESPDCVTTMLKVLQIRNFKPNRLQISVLRYVLDNAEILGSVILS.

The polypeptide is F-box/FBD/LRR-repeat protein At3g14710 (Arabidopsis thaliana (Mouse-ear cress)).